The primary structure comprises 144 residues: Prefoldin subunit alpha (144 aa).

Belongs to the prefoldin subunit alpha family. As to quaternary structure, heterohexamer of two alpha and four beta subunits.

It localises to the cytoplasm. Functionally, molecular chaperone capable of stabilizing a range of proteins. Seems to fulfill an ATP-independent, HSP70-like function in archaeal de novo protein folding. The sequence is that of Prefoldin subunit alpha from Methanococcus maripaludis (strain DSM 14266 / JCM 13030 / NBRC 101832 / S2 / LL).